We begin with the raw amino-acid sequence, 499 residues long: Glycerol kinase (499 aa).

T12 serves as a coordination point for ADP. Residues T12, T13, and S14 each contribute to the ATP site. Residue T12 participates in sn-glycerol 3-phosphate binding. Residue R16 participates in ADP binding. Residues R82, E83, and Y134 each contribute to the sn-glycerol 3-phosphate site. Residues R82, E83, and Y134 each coordinate glycerol. H230 carries the phosphohistidine; by HPr modification. Residue D244 participates in sn-glycerol 3-phosphate binding. Positions 244 and 245 each coordinate glycerol. T266 and G309 together coordinate ADP. ATP is bound by residues T266, G309, Q313, and G410. ADP contacts are provided by G410 and N414.

This sequence belongs to the FGGY kinase family. Homotetramer and homodimer (in equilibrium). In terms of processing, the phosphoenolpyruvate-dependent sugar phosphotransferase system (PTS), including enzyme I, and histidine-containing protein (HPr) are required for the phosphorylation, which leads to the activation of the enzyme.

The enzyme catalyses glycerol + ATP = sn-glycerol 3-phosphate + ADP + H(+). It functions in the pathway polyol metabolism; glycerol degradation via glycerol kinase pathway; sn-glycerol 3-phosphate from glycerol: step 1/1. Activated by phosphorylation and inhibited by fructose 1,6-bisphosphate (FBP). Functionally, key enzyme in the regulation of glycerol uptake and metabolism. Catalyzes the phosphorylation of glycerol to yield sn-glycerol 3-phosphate. This Staphylococcus epidermidis (strain ATCC 12228 / FDA PCI 1200) protein is Glycerol kinase.